The chain runs to 158 residues: NADH-quinone oxidoreductase subunit B (158 aa).

Residues C37, C38, C102, and C132 each coordinate [4Fe-4S] cluster.

Belongs to the complex I 20 kDa subunit family. As to quaternary structure, NDH-1 is composed of 14 different subunits. Subunits NuoB, C, D, E, F, and G constitute the peripheral sector of the complex. The cofactor is [4Fe-4S] cluster.

It is found in the cell inner membrane. The catalysed reaction is a quinone + NADH + 5 H(+)(in) = a quinol + NAD(+) + 4 H(+)(out). Functionally, NDH-1 shuttles electrons from NADH, via FMN and iron-sulfur (Fe-S) centers, to quinones in the respiratory chain. Couples the redox reaction to proton translocation (for every two electrons transferred, four hydrogen ions are translocated across the cytoplasmic membrane), and thus conserves the redox energy in a proton gradient. The chain is NADH-quinone oxidoreductase subunit B from Bordetella petrii (strain ATCC BAA-461 / DSM 12804 / CCUG 43448).